The following is a 519-amino-acid chain: Serine/threonine-protein kinase RIO3 (519 aa).

Ser8 and Ser112 each carry phosphoserine. Phosphotyrosine is present on Tyr122. A disordered region spans residues 122–159 (YEDSDSSEDEVDWQDTRDDPYRPAKPIPTPKKGFIGKG). A compositionally biased stretch (acidic residues) spans 124–134 (DSDSSEDEVDW). 3 positions are modified to phosphoserine: Ser125, Ser127, and Ser128. In terms of domain architecture, Protein kinase spans 251 to 519 (ETITGCISTG…DGGPPILYDE (269 aa)). Residues 257–265 (ISTGKESVV) and Lys290 each bind ATP. Asp406 (proton acceptor) is an active-site residue.

It belongs to the protein kinase superfamily. RIO-type Ser/Thr kinase family. As to quaternary structure, interacts with CASP10. Interacts with IRF3; RIOK3 probably mediates the interaction of TBK1 with IRF3. Associated with 40S pre-ribosomal particles. Mg(2+) serves as cofactor. Autophosphorylated (in vitro).

It localises to the cytoplasm. The enzyme catalyses L-seryl-[protein] + ATP = O-phospho-L-seryl-[protein] + ADP + H(+). The catalysed reaction is L-threonyl-[protein] + ATP = O-phospho-L-threonyl-[protein] + ADP + H(+). Functionally, involved in regulation of type I interferon (IFN)-dependent immune response which plays a critical role in the innate immune response against DNA and RNA viruses. May act as an adapter protein essential for the recruitment of TBK1 to IRF3. Phosphorylates IFIH1 within the C-terminal region interfering with IFIH1 filament assembly on long dsRNA and resulting in attenuated IFIH1-signaling. Can inhibit CASP10 isoform 7-mediated activation of the NF-kappaB signaling pathway. May play a role in the biogenesis of the 40S ribosomal subunit. Involved in the processing of 21S pre-rRNA to the mature 18S rRNA. In Bos taurus (Bovine), this protein is Serine/threonine-protein kinase RIO3 (RIOK3).